The following is a 71-amino-acid chain: Ranatuerin-2Va (71 aa).

A signal peptide spans 1-22 (MFTLKKSFLLLFFLGTITLSLC). Positions 23–43 (EQERGADEDDGVEMTEEEVKR) are excised as a propeptide. A disulfide bond links C66 and C71.

Expressed by the skin glands.

The protein localises to the secreted. Antimicrobial peptide. The polypeptide is Ranatuerin-2Va (Odorrana versabilis (Chinese bamboo leaf odorous frog)).